Reading from the N-terminus, the 45-residue chain is Putative potassium channel blocker (45 aa).

Expressed by the venom gland.

The protein localises to the secreted. Inhibits potassium channels. This Hottentotta tamulus (Eastern Indian scorpion) protein is Putative potassium channel blocker.